A 216-amino-acid chain; its full sequence is 3-keto-L-gulonate-6-phosphate decarboxylase UlaD (216 aa).

Asp-11 is a binding site for substrate. Mg(2+) contacts are provided by Glu-33 and Asp-62. Residue Arg-192 coordinates substrate.

It belongs to the HPS/KGPDC family. KGPDC subfamily. In terms of assembly, homodimer. Mg(2+) serves as cofactor.

It catalyses the reaction 3-dehydro-L-gulonate 6-phosphate + H(+) = L-xylulose 5-phosphate + CO2. The protein operates within cofactor degradation; L-ascorbate degradation; D-xylulose 5-phosphate from L-ascorbate: step 2/4. Functionally, catalyzes the decarboxylation of 3-keto-L-gulonate-6-P into L-xylulose-5-P. Is involved in the anaerobic L-ascorbate utilization. The protein is 3-keto-L-gulonate-6-phosphate decarboxylase UlaD of Salmonella typhi.